Reading from the N-terminus, the 472-residue chain is Serine/threonine-protein kinase sax-1 (472 aa).

The region spanning 87-381 (FESLKVIGRG…LDEIKQCPFF (295 aa)) is the Protein kinase domain. Residues 93–101 (IGRGAFGEV) and lysine 116 contribute to the ATP site. Aspartate 210 (proton acceptor) is an active-site residue. Positions 382–452 (RRIDWNHIRE…KRFDGLTQKM (71 aa)) constitute an AGC-kinase C-terminal domain.

This sequence belongs to the protein kinase superfamily. AGC Ser/Thr protein kinase family. It depends on Mg(2+) as a cofactor.

Its subcellular location is the cytoplasm. It is found in the nucleus. The catalysed reaction is L-seryl-[protein] + ATP = O-phospho-L-seryl-[protein] + ADP + H(+). The enzyme catalyses L-threonyl-[protein] + ATP = O-phospho-L-threonyl-[protein] + ADP + H(+). Acts with sax-2 to restrict the growth of both primary and secondary neurites. Regulates mechanosensory tiling by controlling the termination point of sensory dendrites. This Caenorhabditis briggsae protein is Serine/threonine-protein kinase sax-1.